Here is a 63-residue protein sequence, read N- to C-terminus: MKVNDRVTVKTDGGPRREGVVLEVEQFSEGVMYLVSLEDYPAGVWFFNEIDSHDGTFVEPLHK.

This sequence belongs to the DsrB family.

This is Protein DsrB from Yersinia enterocolitica serotype O:8 / biotype 1B (strain NCTC 13174 / 8081).